The primary structure comprises 162 residues: Phosphopantetheine adenylyltransferase (162 aa).

Position 9 (S9) interacts with substrate. ATP is bound by residues S9 to F10 and H17. Residues K41, L73, and K87 each coordinate substrate. ATP-binding positions include G88–R90, E98, and Y123–S129.

It belongs to the bacterial CoaD family. As to quaternary structure, homohexamer. Requires Mg(2+) as cofactor.

The protein resides in the cytoplasm. It carries out the reaction (R)-4'-phosphopantetheine + ATP + H(+) = 3'-dephospho-CoA + diphosphate. Its pathway is cofactor biosynthesis; coenzyme A biosynthesis; CoA from (R)-pantothenate: step 4/5. Functionally, reversibly transfers an adenylyl group from ATP to 4'-phosphopantetheine, yielding dephospho-CoA (dPCoA) and pyrophosphate. In Symbiobacterium thermophilum (strain DSM 24528 / JCM 14929 / IAM 14863 / T), this protein is Phosphopantetheine adenylyltransferase.